Here is an 81-residue protein sequence, read N- to C-terminus: Putative CNGA1-overlapping antisense gene protein (81 aa).

As to expression, expressed in brain, notably in regions involved in long-term potentiation and long-term depression, such as hippocampal CA1 and CA3, dentate gyrus and cerebellar Purkinje layer.

The protein is Putative CNGA1-overlapping antisense gene protein of Homo sapiens (Human).